A 176-amino-acid polypeptide reads, in one-letter code: Tubulin polymerization-promoting protein family member 3 (176 aa).

An N-acetylalanine modification is found at Ala-2.

The protein belongs to the TPPP family.

The protein localises to the cytoplasm. It is found in the cytoskeleton. Regulator of microtubule dynamic that has microtubule bundling activity. Required for embryo implantation; possibly by regulating beta-catenin. Also required for decidualization via regulation of beta-catenin. This Rattus norvegicus (Rat) protein is Tubulin polymerization-promoting protein family member 3 (Tppp3).